The sequence spans 444 residues: Multidrug resistance protein MdtA (444 aa).

The N-terminal stretch at 1 to 20 (MKSQSKRTSRLFVFVGVVVA) is a signal peptide. Over residues 37-52 (NNTSGAQQSARGQDTS) the composition is skewed to polar residues. 2 disordered regions span residues 37–60 (NNTS…RNTP) and 398–444 (TPRS…AEKS). The segment covering 409–419 (ASAEKAAAEAE) has biased composition (low complexity). Positions 435–444 (ARSTTAAEKS) are enriched in polar residues.

Belongs to the membrane fusion protein (MFP) (TC 8.A.1) family. Part of a tripartite efflux system composed of MdtA, MdtB and MdtC.

It localises to the cell inner membrane. In Yersinia pseudotuberculosis serotype O:3 (strain YPIII), this protein is Multidrug resistance protein MdtA.